A 447-amino-acid polypeptide reads, in one-letter code: Beclin-1 (447 aa).

Positions 105-124 (TMENLSRRLKVTSNLFDIMS) match the BH3 motif. Residues 109-156 (LSRRLKVTSNLFDIMSGQTDIDHPLCEECTDTLLDHLDTQLNITENEC) form an interaction with BCL2 and BCL2L1 isoform Bcl-X(L) region. A coiled-coil region spans residues 140-214 (TLLDHLDTQL…VAKELDEGRN (75 aa)). The tract at residues 242–447 (DDLKSVDNQM…AWVSSQFYNR (206 aa)) is evolutionary conserved domain (ECD). Residue Lys-399 forms a Glycyl lysine isopeptide (Lys-Gly) (interchain with G-Cter in ubiquitin) linkage. Positions 422–447 (WTKALKFMLTNLKWGLAWVSSQFYNR) are required for membrane-association.

Belongs to the beclin family. Component of the PI3K (PI3KC3/PI3K-III/class III phosphatidylinositol 3-kinase) complex. Interacts with the poly-Gln domain of ATXN3; the interaction causes deubiquitination at Lys-399 and stabilizes BECN1. Polyubiquitinated at Lys-399 with 'Lys-48'-linkages. 'Lys-48'-linked polyubiquitination of Lys-399 leads to degradation. Deubiquitinated by ATXN3, leading to stabilization.

The protein resides in the cytoplasm. Its subcellular location is the golgi apparatus. It is found in the trans-Golgi network membrane. The protein localises to the endosome membrane. It localises to the endoplasmic reticulum membrane. The protein resides in the mitochondrion membrane. Its subcellular location is the endosome. It is found in the cytoplasmic vesicle. The protein localises to the autophagosome. Plays a central role in autophagy. Acts as a core subunit of different PI3K complex forms that mediate formation of phosphatidylinositol 3-phosphate and are believed to play a role in multiple membrane trafficking pathways: PI3KC3-C1 is involved in initiation of autophagosomes and PI3KC3-C2 in maturation of autophagosomes and endocytosis. Involved in regulation of degradative endocytic trafficking and required for the abscission step in cytokinesis, probably in the context of PI3KC3-C2. Essential for the formation of PI3KC3-C2 but not PI3KC3-C1 PI3K complex forms. Involved in endocytosis including endosome formation in neuronal cells. This chain is Beclin-1 (becn1), found in Danio rerio (Zebrafish).